The chain runs to 215 residues: 3-isopropylmalate dehydratase small subunit (215 aa).

It belongs to the LeuD family. LeuD type 1 subfamily. Heterodimer of LeuC and LeuD.

The catalysed reaction is (2R,3S)-3-isopropylmalate = (2S)-2-isopropylmalate. Its pathway is amino-acid biosynthesis; L-leucine biosynthesis; L-leucine from 3-methyl-2-oxobutanoate: step 2/4. Its function is as follows. Catalyzes the isomerization between 2-isopropylmalate and 3-isopropylmalate, via the formation of 2-isopropylmaleate. This chain is 3-isopropylmalate dehydratase small subunit, found in Teredinibacter turnerae (strain ATCC 39867 / T7901).